A 103-amino-acid chain; its full sequence is G0/G1 switch protein 2 (103 aa).

Directly interacts with BCL2; this interaction prevents the formation of the anti-apoptotic BAX-BCL2 complex.

The protein resides in the mitochondrion. In terms of biological role, promotes apoptosis by binding to BCL2, hence preventing the formation of protective BCL2-BAX heterodimers. In Mus musculus (Mouse), this protein is G0/G1 switch protein 2 (G0s2).